Consider the following 421-residue polypeptide: MLEGDEKQSRALDFNRLEVLSLLGRGAKGVVFLVRDDDAKLLALKVILKEAIEKKKKGRESEDDEYKRVSFEQGVLSRFDHPLFPSLHGVLATDKVIGYAIDYCPGQNLNSLRKMQSESMFSDEIIRFYAAELVLALDYLHNQGIVYRDLKPDNVMIQENGHLMLIDFDLSTNLAPRTPQPSPSLSKPSPTMKRKKRLFRFTSFCNSGISPQESISVHSSSTLAVSDSSGEKSNSFVGTEEYVAPEVISGDGHDFAVDWWSLGVVLYEMLYGATPFRGSNRKETFYRILSKPPNLTGETTSLRDLIRRLLEKDPSRRINVEEIKGHDFFRGVDWEKVILVSRPPYIPAPDDGGDKGTDVNTKMDVENIVQEIFAARQEREKQSGDNNKNANMKIKDNTSGEWVKGLNNNHDLESDNNFLVF.

The Protein kinase domain maps to 17 to 329 (LEVLSLLGRG…VEEIKGHDFF (313 aa)). ATP-binding positions include 23 to 31 (LGRGAKGVV) and K45. Catalysis depends on D149, which acts as the Proton acceptor. The segment at 167–246 (DFDLSTNLAP…VGTEEYVAPE (80 aa)) is activation loop. A Phosphoserine; by PDPK1 modification is found at S235. Positions 330–421 (RGVDWEKVIL…LESDNNFLVF (92 aa)) constitute an AGC-kinase C-terminal domain. The short motif at 418–421 (FLVF) is the PIF element.

Belongs to the protein kinase superfamily. AGC Ser/Thr protein kinase family. Interacts with PDK1 and PDK2. Expressed in roots and root hair cells.

The catalysed reaction is L-seryl-[protein] + ATP = O-phospho-L-seryl-[protein] + ADP + H(+). It carries out the reaction L-threonyl-[protein] + ATP = O-phospho-L-threonyl-[protein] + ADP + H(+). Activated in response to hydrogen peroxide and cellulase elicitor. Activated by PDK1 in a phosphatidic acid dependent manner. In terms of biological role, involved in oxidative burst-mediated signaling. Required for basal resistance to P.parasitica infection and root hair growth. Partly required for the activation of MPK3 and MPK6 by hydrogen peroxide and cellulase elicitor. This chain is Serine/threonine-protein kinase OXI1, found in Arabidopsis thaliana (Mouse-ear cress).